The chain runs to 474 residues: tRNA-2-methylthio-N(6)-dimethylallyladenosine synthase (474 aa).

The region spanning K3 to G120 is the MTTase N-terminal domain. [4Fe-4S] cluster is bound by residues C12, C49, C83, C157, C161, and C164. The region spanning R143–A375 is the Radical SAM core domain. Residues R378–R441 form the TRAM domain.

This sequence belongs to the methylthiotransferase family. MiaB subfamily. In terms of assembly, monomer. It depends on [4Fe-4S] cluster as a cofactor.

The protein resides in the cytoplasm. It catalyses the reaction N(6)-dimethylallyladenosine(37) in tRNA + (sulfur carrier)-SH + AH2 + 2 S-adenosyl-L-methionine = 2-methylsulfanyl-N(6)-dimethylallyladenosine(37) in tRNA + (sulfur carrier)-H + 5'-deoxyadenosine + L-methionine + A + S-adenosyl-L-homocysteine + 2 H(+). In terms of biological role, catalyzes the methylthiolation of N6-(dimethylallyl)adenosine (i(6)A), leading to the formation of 2-methylthio-N6-(dimethylallyl)adenosine (ms(2)i(6)A) at position 37 in tRNAs that read codons beginning with uridine. This Klebsiella pneumoniae subsp. pneumoniae (strain ATCC 700721 / MGH 78578) protein is tRNA-2-methylthio-N(6)-dimethylallyladenosine synthase.